Consider the following 144-residue polypeptide: Transcriptional regulator SlyA (144 aa).

Residues E2–K135 form the HTH marR-type domain. A DNA-binding region (H-T-H motif) is located at residues Q49 to E72.

This sequence belongs to the SlyA family. Homodimer.

Functionally, transcription regulator that can specifically activate or repress expression of target genes. This chain is Transcriptional regulator SlyA, found in Sodalis glossinidius (strain morsitans).